An 827-amino-acid polypeptide reads, in one-letter code: Ribosome biogenesis protein ERB1 (827 aa).

A disordered region spans residues 1-129 (MVHSKKDKSV…DFSDDNDTRP (129 aa)). Basic and acidic residues predominate over residues 7–18 (DKSVMKHSDIKK). A compositionally biased stretch (acidic residues) spans 45–60 (CDSDDDEEFQSAEEEV). Low complexity predominate over residues 61–77 (LSSGSESSSKEGSTPGS). Acidic residues-rich tracts occupy residues 81-99 (GSDE…DEDA) and 108-124 (EEGD…FSDD). The tract at residues 291–409 (RFVPSKHEAK…LRKVPGYGES (119 aa)) is required for interaction with NOP7. The required for interaction with YTM1 stretch occupies residues 409–445 (SVRERFERSLDLYLAPRVRKNKLNIDPESLIPELPSP). WD repeat units lie at residues 461-500 (GHKG…EVYK), 509-549 (NQDD…FEVE), 657-695 (KSKG…LVKK), 698-737 (PGAR…TPYK), 741-780 (YHEK…DMMK), and 796-827 (VNSL…LWTT).

This sequence belongs to the WD repeat BOP1/ERB1 family. Component of the NOP7 complex, composed of ERB1, NOP7 and YTM1. The complex is held together by ERB1, which interacts with NOP7 via its N-terminal domain and with YTM1 via a high-affinity interaction between the seven-bladed beta-propeller domains of the 2 proteins. The NOP7 complex associates with the 66S pre-ribosome.

The protein localises to the nucleus. It localises to the nucleolus. The protein resides in the nucleoplasm. Component of the NOP7 complex, which is required for maturation of the 25S and 5.8S ribosomal RNAs and formation of the 60S ribosome. In Eremothecium gossypii (strain ATCC 10895 / CBS 109.51 / FGSC 9923 / NRRL Y-1056) (Yeast), this protein is Ribosome biogenesis protein ERB1.